Reading from the N-terminus, the 355-residue chain is Zinc finger protein CONSTANS-LIKE 5 (355 aa).

8 residues coordinate Zn(2+): C22, C25, C45, H50, C61, C64, C84, and H89. The segment at 22-60 adopts a B box-type 1; atypical zinc-finger fold; sequence CDACKSVTAAVFCRVDSAFLCIACDTRIHSFTRHERVWV. A B box-type 2; atypical zinc finger spans residues 61-103; sequence CEVCEQAPAAVTCKADAAALCVSCDADIHSANPLASRHERVPV. One can recognise a CCT domain in the interval 285–327; the sequence is REARVLRYREKRKNRKFEKTIRYASRKAYAESRPRIKGRFAKR.

This sequence belongs to the CONSTANS family.

Its subcellular location is the nucleus. The protein is Zinc finger protein CONSTANS-LIKE 5 (COL5) of Arabidopsis thaliana (Mouse-ear cress).